Reading from the N-terminus, the 307-residue chain is Aspartate carbamoyltransferase catalytic subunit (307 aa).

Carbamoyl phosphate-binding residues include arginine 54 and threonine 55. Position 83 (lysine 83) interacts with L-aspartate. The carbamoyl phosphate site is built by arginine 104, histidine 132, and glutamine 135. Arginine 165 and arginine 228 together coordinate L-aspartate. Leucine 267 and proline 268 together coordinate carbamoyl phosphate.

Belongs to the aspartate/ornithine carbamoyltransferase superfamily. ATCase family. As to quaternary structure, heterododecamer (2C3:3R2) of six catalytic PyrB chains organized as two trimers (C3), and six regulatory PyrI chains organized as three dimers (R2).

The enzyme catalyses carbamoyl phosphate + L-aspartate = N-carbamoyl-L-aspartate + phosphate + H(+). Its pathway is pyrimidine metabolism; UMP biosynthesis via de novo pathway; (S)-dihydroorotate from bicarbonate: step 2/3. Its function is as follows. Catalyzes the condensation of carbamoyl phosphate and aspartate to form carbamoyl aspartate and inorganic phosphate, the committed step in the de novo pyrimidine nucleotide biosynthesis pathway. This chain is Aspartate carbamoyltransferase catalytic subunit, found in Clostridium botulinum (strain ATCC 19397 / Type A).